Here is a 512-residue protein sequence, read N- to C-terminus: MGCIKSKRKDNLNDDGVDMKTQPVRNTDRTIYVRDPTSNKQQRPVPESQLLPGQRFQAKDPEEQGDIVVALYPYDGIHPDDLSFKKGEKMKVLEEHGEWWKAKSLSSKREGFIPSNYVAKVNTLETEEWFFKDITRKDAERQLLAPGNSAGAFLIRESETLKGSFSLSVRDYDPMHGDVIKHYKIRSLDNGGYYISPRITFPCISDMIKHYQKQSDGLCRRLEKACISPKPQKPWDKDAWEIPRESIKLVKKLGAGQFGEVWMGYYNNSTKVAVKTLKPGTMSAQAFLEEANLMKTLQHDKLVRLYAVVTKEEPIYIITEFMAKGSLLDFLKSDEGSKVLLPKLIDFSAQIAEGMAYIERKNYIHRDLRAANVLVSESLMCKIADFGLARVIEDNEYTAREGAKFPIKWTAPEAINFGCFTIKSDVWSFGILLYEIVTYGKIPYPGRTNADVMTALSQGYRMPRMENCPDELYDIMKMCWKESAEERPTFDYLQSVLDDFYTATEGQYQQQP.

The segment at 1-50 is disordered; that stretch reads MGCIKSKRKDNLNDDGVDMKTQPVRNTDRTIYVRDPTSNKQQRPVPESQL. A lipid anchor (N-myristoyl glycine) is attached at glycine 2. Cysteine 3 carries S-palmitoyl cysteine lipidation. The region spanning 63-123 is the SH3 domain; that stretch reads EQGDIVVALY…PSNYVAKVNT (61 aa). Residues 129–226 enclose the SH2 domain; that stretch reads WFFKDITRKD…GLCRRLEKAC (98 aa). At tyrosine 193 the chain carries Phosphotyrosine. Serine 228 is modified (phosphoserine). The Protein kinase domain maps to 247–501; it reads IKLVKKLGAG…YLQSVLDDFY (255 aa). Residues 253 to 261 and lysine 275 contribute to the ATP site; that span reads LGAGQFGEV. Tyrosine 306 and tyrosine 316 each carry phosphotyrosine. Residue aspartate 367 is the Proton acceptor of the active site. Tyrosine 397 bears the Phosphotyrosine; by autocatalysis mark. 2 positions are modified to phosphotyrosine: tyrosine 460 and tyrosine 473. At tyrosine 508 the chain carries Phosphotyrosine; by autocatalysis, CSK and MATK.

Belongs to the protein kinase superfamily. Tyr protein kinase family. SRC subfamily. In terms of assembly, interacts with TEC. Interacts (via SH2 domain) with FLT3 (tyrosine phosphorylated). Interacts with LIME1 and with CD79A upon activation of the B-cell antigen receptor. Interacts with the B-cell receptor complex. Interacts with phosphorylated THEMIS2. Interacts with EPOR. Interacts with MS4A2/FCER1B. Interaction (via the SH2 and SH3 domains) with MUC1 is stimulated by IL7 and the subsequent phosphorylation increases the binding between MUC1 and CTNNB1/beta-catenin. Interacts with ADAM15. Interacts with NDFIP2 and more weakly with NDFIP1. Interacts with FASLG. Interacts with KIT. Interacts with HCLS1. Interacts with FCGR2B. Interacts with FCGR1A; the interaction may be indirect. Interacts with CD19, CD22, CD79A and CD79B. Interacts (via SH3 domain) with CBLC, PPP1R15A and PDE4A. Interacts with TGFB1I1. Interacts (via SH3 domain) with PIK3R1, the regulatory subunit of phosphatidylinositol 3-kinase; this interaction enhances phosphatidylinositol 3-kinase activity. Interacts with CSF2RB, the common subunit of the IL3, IL5 and CSF2 receptors. Interacts with PAG1; identified in a complex with PAG1 and STAT3. Interacts with ABL1. Interacts with PTPN6/SHP-1. Interacts (via SH3 domain) with SCIMP (via proline-rich region). This interaction facilitates the phosphorylation of SCIMP 'Tyr-96', which enhances binding of SCIMP to TLR4, and consequently the phosphorylation of TLR4 in response to stimulation by lipopolysaccharide in macrophages. Interacts with LPXN (via LD motif 3) and the interaction is induced upon B-cell antigen receptor (BCR) activation. Interacts (via SH3-domain) with ANKRD54 (via ankyrin repeat region) in an activation-independent status of LYN. Forms a multiprotein complex with ANKRD54 and HCLS1. Interacts (via SH2 and SH3 domains) with UNC119; leading to LYN activation. Interacts with CD36. Interacts with LYN. Interacts with SKAP1 and FYB1; this interaction promotes the phosphorylation of CLNK. Interacts with BCAR1/CAS and NEDD9/HEF1. Post-translationally, ubiquitinated. Ubiquitination is SH3-dependent. Autophosphorylated. Phosphorylated on tyrosine residues in response to KIT signaling. Phosphorylation at Tyr-397 is required for optimal activity. Phosphorylation at Tyr-508 inhibits kinase activity. Phosphorylated at Tyr-508 by CSK. Dephosphorylated by PTPRC/CD45. Becomes rapidly phosphorylated upon activation of the B-cell receptor and the immunoglobulin receptor FCGR1A. Phosphorylated in response to integrin ITGB1 in B-cells. As to expression, detected in spleen (at protein level). Expressed predominantly in B-lymphoid and myeloid cells.

The protein resides in the cell membrane. Its subcellular location is the nucleus. It localises to the cytoplasm. It is found in the perinuclear region. The protein localises to the golgi apparatus. The protein resides in the membrane. It catalyses the reaction L-tyrosyl-[protein] + ATP = O-phospho-L-tyrosyl-[protein] + ADP + H(+). Its activity is regulated as follows. Subject to autoinhibition, mediated by intramolecular interactions between the SH2 domain and the C-terminal phosphotyrosine. Phosphorylation at Tyr-397 is required for optimal activity. Phosphorylated by CSK at Tyr-508; phosphorylation at Tyr-508 inhibits kinase activity. Kinase activity is modulated by dephosphorylation by PTPRC/CD45. Non-receptor tyrosine-protein kinase that transmits signals from cell surface receptors and plays an important role in the regulation of innate and adaptive immune responses, hematopoiesis, responses to growth factors and cytokines, integrin signaling, but also responses to DNA damage and genotoxic agents. Functions primarily as negative regulator, but can also function as activator, depending on the context. Required for the initiation of the B-cell response, but also for its down-regulation and termination. Plays an important role in the regulation of B-cell differentiation, proliferation, survival and apoptosis, and is important for immune self-tolerance. Acts downstream of several immune receptors, including the B-cell receptor, CD79A, CD79B, CD5, CD19, CD22, FCER1, FCGR2, FCGR1A, TLR2 and TLR4. Plays a role in the inflammatory response to bacterial lipopolysaccharide. Mediates the responses to cytokines and growth factors in hematopoietic progenitors, platelets, erythrocytes, and in mature myeloid cells, such as dendritic cells, neutrophils and eosinophils. Acts downstream of EPOR, KIT, MPL, the chemokine receptor CXCR4, as well as the receptors for IL3, IL5 and CSF2. Plays an important role in integrin signaling. Regulates cell proliferation, survival, differentiation, migration, adhesion, degranulation, and cytokine release. Involved in the regulation of endothelial activation, neutrophil adhesion and transendothelial migration. Down-regulates signaling pathways by phosphorylation of immunoreceptor tyrosine-based inhibitory motifs (ITIM), that then serve as binding sites for phosphatases, such as PTPN6/SHP-1, PTPN11/SHP-2 and INPP5D/SHIP-1, that modulate signaling by dephosphorylation of kinases and their substrates. Phosphorylates LIME1 in response to CD22 activation. Phosphorylates BTK, CBL, CD5, CD19, CD72, CD79A, CD79B, CSF2RB, DOK1, HCLS1, LILRB3/PIR-B, MS4A2/FCER1B, SYK and TEC. Promotes phosphorylation of SIRPA, PTPN6/SHP-1, PTPN11/SHP-2 and INPP5D/SHIP-1. Required for rapid phosphorylation of FER in response to FCER1 activation. Mediates KIT phosphorylation. Acts as an effector of EPOR (erythropoietin receptor) in controlling KIT expression and may play a role in erythroid differentiation during the switch between proliferation and maturation. Depending on the context, activates or inhibits several signaling cascades. Regulates phosphatidylinositol 3-kinase activity and AKT1 activation. Regulates activation of the MAP kinase signaling cascade, including activation of MAP2K1/MEK1, MAPK1/ERK2, MAPK3/ERK1, MAPK8/JNK1 and MAPK9/JNK2. Mediates activation of STAT5A and/or STAT5B. Phosphorylates LPXN on 'Tyr-72'. Kinase activity facilitates TLR4-TLR6 heterodimerization and signal initiation. Phosphorylates SCIMP on 'Tyr-96'; this enhances binding of SCIMP to TLR4, promoting the phosphorylation of TLR4, and a selective cytokine response to lipopolysaccharide in macrophages. Phosphorylates CLNK. Phosphorylates BCAR1/CAS and NEDD9/HEF1. This chain is Tyrosine-protein kinase Lyn (Lyn), found in Rattus norvegicus (Rat).